We begin with the raw amino-acid sequence, 677 residues long: Zinc finger CCCH domain-containing protein 23 (677 aa).

A disordered region spans residues 66–117 (PPQAASSSPTVPAAHSPFLLSRQNSGRCPAPSPSSWAQAQPFSRSNSMGNGG). Residues 69-82 (AASSSPTVPAAHSP) show a composition bias toward low complexity. Positions 98–113 (PSSWAQAQPFSRSNSM) are enriched in polar residues. The C3H1-type zinc finger occupies 228 to 255 (GFGWKPCLYYARGFCKNGSTCRFVHGGL). Residues 359–435 (RQIYLTFPAD…RVLVKPYKEK (77 aa)) enclose the RRM domain. The stretch at 480–513 (ANELMLRRKLEEQQQAAELQQAIDLHSRRLIGLQ) forms a coiled coil. A compositionally biased stretch (polar residues) spans 535–562 (TPITNAFTSGQPGATTIVESPPSSTGQL). The disordered stretch occupies residues 535–607 (TPITNAFTSG…EHNLPDSPFA (73 aa)). The segment covering 589 to 601 (RNADSDQSGEHNL) has biased composition (basic and acidic residues).

The sequence is that of Zinc finger CCCH domain-containing protein 23 from Oryza sativa subsp. japonica (Rice).